The primary structure comprises 333 residues: MRNVFRTARLTRSARAIVKTLLIAIATVTFYFTSDLALPQSAAAYPFWAQQTYPETPREPTGRIVCANCHLAAKVTEVEVPQSVLPDTVFKAIVKIPYDLSAQQVGADGSKVGLNVGAVLMLPEGFKIAPEDRISEELKEEIGDTAFQPYSEDKENVVIVGPLPGEQYQEIIFPVLSPNPATDKNIHFGKYSVHVGGNRGRGQVYPTGEKSNNSVYNASATGTITKIAKEEDADGNVKYLVNIQPESGDVVVDTVPLGPDLIVSEGQAVKTGDALTNNPNVGGFGQIDAEIVLQDSSRVKWMIAFVALVMLAQVMLVLKKKQVEKVQAAEMNF.

The signal sequence occupies residues 1 to 16 (MRNVFRTARLTRSARA). A helical transmembrane segment spans residues 17-36 (IVKTLLIAIATVTFYFTSDL). Residues Y45, C66, C69, and H70 each coordinate heme. Residues 299–319 (VKWMIAFVALVMLAQVMLVLK) form a helical membrane-spanning segment.

This sequence belongs to the cytochrome f family. The 4 large subunits of the cytochrome b6-f complex are cytochrome b6, subunit IV (17 kDa polypeptide, PetD), cytochrome f and the Rieske protein, while the 4 small subunits are PetG, PetL, PetM and PetN. The complex functions as a dimer. Requires heme as cofactor.

It is found in the cellular thylakoid membrane. Its function is as follows. Component of the cytochrome b6-f complex, which mediates electron transfer between photosystem II (PSII) and photosystem I (PSI), cyclic electron flow around PSI, and state transitions. The chain is Cytochrome f from Nostoc punctiforme (strain ATCC 29133 / PCC 73102).